A 578-amino-acid chain; its full sequence is Monooxygenase cfoE (578 aa).

The helical transmembrane segment at isoleucine 549–phenylalanine 569 threads the bilayer.

It belongs to the FMO family. The cofactor is FAD.

It localises to the membrane. Its pathway is secondary metabolite biosynthesis; flavonoid biosynthesis. Monooxygenase; part of the gene cluster that mediates the biosynthesis of chlorflavonin, a fungal flavonoid with acetolactate synthase inhibitory activity. Within the pathway, cfoE is responsible for the chlorination of the flavonoid skeleton at position C3'. The pathway begins with the PKS-NRPS hybrid synthetase cfoA that uses benzoic acid or p-hydroxybenzoic acid as a starter unit with four rounds of chain elongation using malonyl-CoA to form the chalcone skeleton. Then, a new type of chalcone isomerase, cfoK, catalyzes the conversion of the chalcone into a flavanone by a histidine-mediated oxa-Michael addition mechanism. The desaturation of flavanone to flavone is catalyzed by a new type of flavone synthase, the flavin mononucleotide (FMN)-dependent oxidoreductase cfoJ. Monooxygenases cfoF, cfoG, and P450 cfoH are responsible for the hydroxylation of the flavonoid skeleton at sites C3, C8, and C2', respectively. Like cfoF, the dehydratase cfoI plays also a role in the hydroxylation of position C3. Methyltransferases cfoB, cfoC, and cfoD then catalyze the methylation of C7-OH, C8-OH, and C3-OH, respectively. Finally, the monooxygenase cfoE is responsible for the chlorination of flavonoid at position C3'. The polypeptide is Monooxygenase cfoE (Aspergillus candidus).